We begin with the raw amino-acid sequence, 265 residues long: 4-hydroxy-tetrahydrodipicolinate reductase (265 aa).

NAD(+)-binding positions include 7 to 12 (GASGRM) and Asp33. Arg34 serves as a coordination point for NADP(+). NAD(+)-binding positions include 96–98 (GTT) and 120–123 (AANM). The active-site Proton donor/acceptor is the His153. His154 provides a ligand contact to (S)-2,3,4,5-tetrahydrodipicolinate. Residue Lys157 is the Proton donor of the active site. (S)-2,3,4,5-tetrahydrodipicolinate is bound at residue 163 to 164 (GT).

This sequence belongs to the DapB family.

It is found in the cytoplasm. The enzyme catalyses (S)-2,3,4,5-tetrahydrodipicolinate + NAD(+) + H2O = (2S,4S)-4-hydroxy-2,3,4,5-tetrahydrodipicolinate + NADH + H(+). It carries out the reaction (S)-2,3,4,5-tetrahydrodipicolinate + NADP(+) + H2O = (2S,4S)-4-hydroxy-2,3,4,5-tetrahydrodipicolinate + NADPH + H(+). It participates in amino-acid biosynthesis; L-lysine biosynthesis via DAP pathway; (S)-tetrahydrodipicolinate from L-aspartate: step 4/4. Its function is as follows. Catalyzes the conversion of 4-hydroxy-tetrahydrodipicolinate (HTPA) to tetrahydrodipicolinate. The sequence is that of 4-hydroxy-tetrahydrodipicolinate reductase from Burkholderia multivorans (strain ATCC 17616 / 249).